A 449-amino-acid polypeptide reads, in one-letter code: MIVLTIEEILKEVLNEIKPSKEDMEKLQLKANEIIDKIWEIVRENSYPILEVLLVGSSARNTNLKDDYDIDIFVLFDKSVSEDELEEIGLKIGTEAIKRLNGSYNINYASHPYVNGEVDGYEVDIVPCYKIDFGEKIISAVDRTPLHHKFLISRLNERLCDEVRLLKAFLKSLGLYGSDVKTKGFSGYLCELLILHYGSFINLLKEAQNWRIGKKIILKDIFEIYKDVDINKLKKFDEPFIVYDPVDLNRNVASPLSKDNFCRFIFYSRQFLKNPSIEFFKDYAKKLEEILENREHGYRLILKIPRENVVDDIIYPQMEKLQKSINKVIVKNEFVILNSKCFADDNYCYLYWEFLVYELPKIALREGPPVFEKERAERFLKKYGKVFIRDCKLFAYTEREYSHIIDLFKDIVNGNLQNISIPKYVNPRNGKIIELNSHGEHKQFNKECQ.

ATP contacts are provided by Ser-57 and Arg-60. The CTP site is built by Ser-57 and Arg-60. Mg(2+) contacts are provided by Asp-69, Asp-71, and Asp-124. ATP is bound by residues His-147, Lys-167, and Tyr-176. CTP contacts are provided by His-147, Lys-167, and Tyr-176.

Belongs to the tRNA nucleotidyltransferase/poly(A) polymerase family. Archaeal CCA-adding enzyme subfamily. Homodimer. Requires Mg(2+) as cofactor.

It carries out the reaction a tRNA precursor + 2 CTP + ATP = a tRNA with a 3' CCA end + 3 diphosphate. The enzyme catalyses a tRNA with a 3' CCA end + 2 CTP + ATP = a tRNA with a 3' CCACCA end + 3 diphosphate. Catalyzes the addition and repair of the essential 3'-terminal CCA sequence in tRNAs without using a nucleic acid template. Adds these three nucleotides in the order of C, C, and A to the tRNA nucleotide-73, using CTP and ATP as substrates and producing inorganic pyrophosphate. tRNA 3'-terminal CCA addition is required both for tRNA processing and repair. Also involved in tRNA surveillance by mediating tandem CCA addition to generate a CCACCA at the 3' terminus of unstable tRNAs. While stable tRNAs receive only 3'-terminal CCA, unstable tRNAs are marked with CCACCA and rapidly degraded. This is CCA-adding enzyme from Methanocaldococcus jannaschii (strain ATCC 43067 / DSM 2661 / JAL-1 / JCM 10045 / NBRC 100440) (Methanococcus jannaschii).